We begin with the raw amino-acid sequence, 154 residues long: ATP synthase subunit b (154 aa).

The chain crosses the membrane as a helical span at residues 9 to 29 (AIAFVIFVWFCMKYVWPPLMA).

It belongs to the ATPase B chain family. As to quaternary structure, F-type ATPases have 2 components, F(1) - the catalytic core - and F(0) - the membrane proton channel. F(1) has five subunits: alpha(3), beta(3), gamma(1), delta(1), epsilon(1). F(0) has three main subunits: a(1), b(2) and c(10-14). The alpha and beta chains form an alternating ring which encloses part of the gamma chain. F(1) is attached to F(0) by a central stalk formed by the gamma and epsilon chains, while a peripheral stalk is formed by the delta and b chains.

Its subcellular location is the cell inner membrane. In terms of biological role, f(1)F(0) ATP synthase produces ATP from ADP in the presence of a proton or sodium gradient. F-type ATPases consist of two structural domains, F(1) containing the extramembraneous catalytic core and F(0) containing the membrane proton channel, linked together by a central stalk and a peripheral stalk. During catalysis, ATP synthesis in the catalytic domain of F(1) is coupled via a rotary mechanism of the central stalk subunits to proton translocation. Component of the F(0) channel, it forms part of the peripheral stalk, linking F(1) to F(0). This Klebsiella pneumoniae subsp. pneumoniae (strain ATCC 700721 / MGH 78578) protein is ATP synthase subunit b.